Reading from the N-terminus, the 455-residue chain is Bifunctional protein GlmU (455 aa).

The pyrophosphorylase stretch occupies residues 1-227; the sequence is MGLSVIILAA…CEEVQGVNDR (227 aa). UDP-N-acetyl-alpha-D-glucosamine contacts are provided by residues 8–11, Lys-22, Gln-73, 78–79, 100–102, Gly-137, Glu-152, Asn-167, and Asn-225; these read LAAG, GT, and YGD. Asp-102 contacts Mg(2+). Mg(2+) is bound at residue Asn-225. A linker region spans residues 228-248; the sequence is WELTKLERYYQRLMAKKLSLA. The tract at residues 249–455 is N-acetyltransferase; that stretch reads GVTIIDPERF…KGWHRPTKKE (207 aa). 2 residues coordinate UDP-N-acetyl-alpha-D-glucosamine: Arg-332 and Lys-350. His-362 serves as the catalytic Proton acceptor. Residues Tyr-365 and Asn-376 each contribute to the UDP-N-acetyl-alpha-D-glucosamine site. Residues Ala-379, 385 to 386, Ser-404, Ala-422, and Arg-439 each bind acetyl-CoA; that span reads NY.

The protein in the N-terminal section; belongs to the N-acetylglucosamine-1-phosphate uridyltransferase family. It in the C-terminal section; belongs to the transferase hexapeptide repeat family. Homotrimer. Requires Mg(2+) as cofactor.

It localises to the cytoplasm. The enzyme catalyses alpha-D-glucosamine 1-phosphate + acetyl-CoA = N-acetyl-alpha-D-glucosamine 1-phosphate + CoA + H(+). It carries out the reaction N-acetyl-alpha-D-glucosamine 1-phosphate + UTP + H(+) = UDP-N-acetyl-alpha-D-glucosamine + diphosphate. The protein operates within nucleotide-sugar biosynthesis; UDP-N-acetyl-alpha-D-glucosamine biosynthesis; N-acetyl-alpha-D-glucosamine 1-phosphate from alpha-D-glucosamine 6-phosphate (route II): step 2/2. It participates in nucleotide-sugar biosynthesis; UDP-N-acetyl-alpha-D-glucosamine biosynthesis; UDP-N-acetyl-alpha-D-glucosamine from N-acetyl-alpha-D-glucosamine 1-phosphate: step 1/1. It functions in the pathway bacterial outer membrane biogenesis; LPS lipid A biosynthesis. Its function is as follows. Catalyzes the last two sequential reactions in the de novo biosynthetic pathway for UDP-N-acetylglucosamine (UDP-GlcNAc). The C-terminal domain catalyzes the transfer of acetyl group from acetyl coenzyme A to glucosamine-1-phosphate (GlcN-1-P) to produce N-acetylglucosamine-1-phosphate (GlcNAc-1-P), which is converted into UDP-GlcNAc by the transfer of uridine 5-monophosphate (from uridine 5-triphosphate), a reaction catalyzed by the N-terminal domain. The chain is Bifunctional protein GlmU from Coxiella burnetii (strain RSA 493 / Nine Mile phase I).